A 505-amino-acid chain; its full sequence is Actin nucleation-promoting factor WASL (505 aa).

Serine 2 carries the N-acetylserine modification. The WH1 domain occupies 34–141 (LGKKCVTMSS…KAVTDLLGRR (108 aa)). Disordered regions lie at residues 138-163 (LGRR…ATVD) and 185-205 (TKEK…DIGT). Basic residues predominate over residues 186-198 (KEKKKGKAKKKRL). The CRIB domain maps to 203 to 216 (IGTPSNFQHIGHVG). Residue serine 242 is modified to Phosphoserine; by TNK2. A Phosphotyrosine; by FAK1 and TNK2 modification is found at tyrosine 256. Disordered stretches follow at residues 266–406 (EAVK…AGSK), 449–468 (SVTD…SGIV), and 477–505 (KRSK…EWED). Composition is skewed to pro residues over residues 276–349 (APPP…PLPA), 356–365 (SGPPPPPPPL), and 372–391 (APPP…PPGL). Residue arginine 307 is modified to Omega-N-methylarginine. 2 consecutive WH2 domains span residues 405-422 (SKAA…LKKV) and 433-450 (GRDA…LKSV). Residues serine 484 and serine 485 each carry the phosphoserine modification. A compositionally biased stretch (acidic residues) spans 486–505 (DEDEDEDDDEDFEDDDEWED).

In terms of assembly, binds actin and the Arp2/3 complex. Interacts with CDC42. Interacts with FCHSD1. Interacts with FCHSD2. Binds to SH3 domains of GRB2. Interacts with the C-terminal SH3 domain of DNMBP. Interacts with SNX9. Interacts with the WW domains of PRPF40A/FBP11. Interacts with PTK2/FAK1. Interacts with PACSIN1, PACSIN2 and PACSIN3. Interacts with NOSTRIN. Binds to TNK2. Interacts with SNX33. Interacts with NONO (via second RRM domain); the interaction is direct. Component of a multiprotein complex with NONO and SFPQ; associates with the complex via direct interaction with NONO. In terms of processing, phosphorylation at Ser-242, Tyr-256, Ser-484 and Ser-485 enhances actin polymerization activity.

It localises to the cytoplasm. The protein localises to the cytoskeleton. The protein resides in the nucleus. In terms of biological role, regulates actin polymerization by stimulating the actin-nucleating activity of the Arp2/3 complex. Involved in various processes, such as mitosis and cytokinesis, via its role in the regulation of actin polymerization. Together with CDC42, involved in the extension and maintenance of the formation of thin, actin-rich surface projections called filopodia. In addition to its role in the cytoplasm, also plays a role in the nucleus by regulating gene transcription, probably by promoting nuclear actin polymerization. Binds to HSF1/HSTF1 and forms a complex on heat shock promoter elements (HSE) that negatively regulates HSP90 expression. Plays a role in dendrite spine morphogenesis. This chain is Actin nucleation-promoting factor WASL (WASL), found in Bos taurus (Bovine).